Consider the following 807-residue polypeptide: Glycerol-3-phosphate acyltransferase (807 aa).

The short motif at Cys305–Met310 is the HXXXXD motif element.

The protein belongs to the GPAT/DAPAT family.

The protein resides in the cell inner membrane. The catalysed reaction is sn-glycerol 3-phosphate + an acyl-CoA = a 1-acyl-sn-glycero-3-phosphate + CoA. It functions in the pathway phospholipid metabolism; CDP-diacylglycerol biosynthesis; CDP-diacylglycerol from sn-glycerol 3-phosphate: step 1/3. This is Glycerol-3-phosphate acyltransferase from Aliivibrio fischeri (strain ATCC 700601 / ES114) (Vibrio fischeri).